The chain runs to 244 residues: Triosephosphate isomerase (244 aa).

Residue 8–10 (NWK) coordinates substrate. The Electrophile role is filled by histidine 93. The Proton acceptor role is filled by glutamate 161. Substrate contacts are provided by residues glycine 167, serine 206, and 227-228 (GG).

It belongs to the triosephosphate isomerase family. In terms of assembly, homodimer.

It localises to the cytoplasm. It catalyses the reaction D-glyceraldehyde 3-phosphate = dihydroxyacetone phosphate. It functions in the pathway carbohydrate biosynthesis; gluconeogenesis. It participates in carbohydrate degradation; glycolysis; D-glyceraldehyde 3-phosphate from glycerone phosphate: step 1/1. Its function is as follows. Involved in the gluconeogenesis. Catalyzes stereospecifically the conversion of dihydroxyacetone phosphate (DHAP) to D-glyceraldehyde-3-phosphate (G3P). The protein is Triosephosphate isomerase of Deinococcus radiodurans (strain ATCC 13939 / DSM 20539 / JCM 16871 / CCUG 27074 / LMG 4051 / NBRC 15346 / NCIMB 9279 / VKM B-1422 / R1).